A 302-amino-acid polypeptide reads, in one-letter code: NmrA-like family domain-containing protein DDB_G0286605 (302 aa).

NADP(+) is bound by residues 9 to 14 (GGTGYQ), 35 to 39 (RNPES), 56 to 57 (DE), 78 to 80 (TNS), K130, and 157 to 160 (YFQN).

Belongs to the NmrA-type oxidoreductase family.

Functionally, may be a redox sensor protein. This Dictyostelium discoideum (Social amoeba) protein is NmrA-like family domain-containing protein DDB_G0286605.